We begin with the raw amino-acid sequence, 154 residues long: Cold shock domain-containing protein C2 (154 aa).

2 disordered regions span residues 1–22 (MTSE…SPVW) and 36–62 (ERGG…SATA). Ser19 is modified (phosphoserine). The CSD domain occupies 69–136 (VFKGVCKQFS…KFQAVEVVLT (68 aa)).

In terms of tissue distribution, brain-specific. Expression restricted to the pyramidal neurons of the cerebral cortex and in the Purkinje cells of the cerebellum.

The protein resides in the nucleus. The protein localises to the cytoplasm. Functionally, RNA-binding factor which binds specifically to the very 3'-UTR ends of both histone H1 and H3.3 mRNAs, encompassing the polyadenylation signal. Might play a central role in the negative regulation of histone variant synthesis in the developing brain. In Rattus norvegicus (Rat), this protein is Cold shock domain-containing protein C2 (Csdc2).